A 375-amino-acid chain; its full sequence is Heat shock protein 42 (375 aa).

Disordered stretches follow at residues 21–59 (TGQR…HPLY), 81–127 (SPEY…YYHC), 154–238 (PYEG…ETRM), and 347–375 (PKPK…TVEN). Residues 22-48 (GQRGQQGYPRQPQRPQRYHPHYGQVHV) show a composition bias toward low complexity. Over residues 49-58 (GGHHPRHHPL) the composition is skewed to basic residues. Composition is skewed to acidic residues over residues 85 to 101 (GYDD…EDMV) and 158 to 168 (TEPEIEANTEQ). Residues 169–197 (EGEKGEEKDKKDKSEAPKEEAGETNKEKP) are compositionally biased toward basic and acidic residues. Residues serine 182, serine 213, serine 214, serine 215, and serine 223 each carry the phosphoserine modification. Residues 237 to 356 (RMDLPFSPEV…PKPKKRIAIE (120 aa)) form the sHSP domain. Acidic residues predominate over residues 357 to 367 (EIPDEELEFEE).

This sequence belongs to the small heat shock protein (HSP20) family. In terms of assembly, forms oligomeric complexes. Interacts with itself.

The chain is Heat shock protein 42 (HSP42) from Saccharomyces cerevisiae (strain ATCC 204508 / S288c) (Baker's yeast).